We begin with the raw amino-acid sequence, 555 residues long: Carboxylesterase patB (555 aa).

Residues 1–16 form the signal peptide; the sequence is MLFTASLLLLLPWASA. 2 N-linked (GlcNAc...) asparagine glycosylation sites follow: Asn-37 and Asn-75. Ser-258 (acyl-ester intermediate) is an active-site residue. Residue Ser-258 participates in substrate binding. N-linked (GlcNAc...) asparagine glycosylation is present at Asn-311. The Charge relay system role is filled by Glu-380. 2 N-linked (GlcNAc...) asparagine glycosylation sites follow: Asn-388 and Asn-491.

This sequence belongs to the type-B carboxylesterase/lipase family.

It localises to the cytoplasm. Its subcellular location is the cytosol. The catalysed reaction is a carboxylic ester + H2O = an alcohol + a carboxylate + H(+). The protein operates within mycotoxin biosynthesis; patulin biosynthesis. Carboxylesterase; part of the gene cluster that mediates the biosynthesis of patulin, an acetate-derived tetraketide mycotoxin produced by several fungal species that shows antimicrobial properties against several bacteria. The function of patB in patulin synthesis has still to be characterized. The pathway begins with the synthesis of 6-methylsalicylic acid by the polyketide synthase (PKS) patK via condensation of acetate and malonate units. The 6-methylsalicylic acid decarboxylase patG then catalyzes the decarboxylation of 6-methylsalicylic acid to yield m-cresol (also known as 3-methylphenol). These first reactions occur in the cytosol. The intermediate m-cresol is then transported into the endoplasmic reticulum where the cytochrome P450 monooxygenase patH converts it to m-hydroxybenzyl alcohol, which is further converted to gentisyl alcohol by the cytochrome P450 monooxygenase patI. The oxidoreductases patJ and patO further convert gentisyl alcohol to isoepoxydon in the vacuole. PatN catalyzes then the transformation of isoepoxydon into phyllostine. The cluster protein patF is responsible for the conversion from phyllostine to neopatulin whereas the alcohol dehydrogenase patD converts neopatulin to E-ascladiol. The steps between isoepoxydon and E-ascladiol occur in the cytosol, and E-ascladiol is probably secreted to the extracellular space by one of the cluster-specific transporters patC or patM. Finally, the secreted patulin synthase patE catalyzes the conversion of E-ascladiol to patulin. The sequence is that of Carboxylesterase patB from Aspergillus clavatus (strain ATCC 1007 / CBS 513.65 / DSM 816 / NCTC 3887 / NRRL 1 / QM 1276 / 107).